We begin with the raw amino-acid sequence, 385 residues long: Signal transduction histidine-protein kinase/phosphatase DegS (385 aa).

A coiled-coil region spans residues 31–141 (QIGEQSRQQY…IERSESLVSQ (111 aa)). At S76 the chain carries Phosphoserine. In terms of domain architecture, Histidine kinase spans 183-385 (RVSREIHDGP…FIMIKVPLSL (203 aa)). H189 bears the Phosphohistidine; by autocatalysis mark.

Autophosphorylated. Phosphorylated in vitro at Ser-76 by the serine/threonine-protein kinase YbdM, which stimulates the phosphate transfer to DegU.

Its subcellular location is the cytoplasm. The catalysed reaction is ATP + protein L-histidine = ADP + protein N-phospho-L-histidine.. Its activity is regulated as follows. Regulated via serine phosphorylation of its input domain. Phosphotransfer from DegS to DegU is stimulated by phosphorylation on Ser-76 and by DegQ. Its function is as follows. Member of the two-component regulatory system DegS/DegU, which plays an important role in the transition growth phase. Involved in the control of expression of different cellular functions, including production of degradative enzymes such as the neutral and alkaline proteases, flagellum formation and biofilm formation. Acts both as a protein kinase that undergoes autophosphorylation and subsequently transfers the phosphate to DegU, and as a protein phosphatase that dephosphorylates phospho-DegU. The chain is Signal transduction histidine-protein kinase/phosphatase DegS (degS) from Bacillus subtilis (strain 168).